Consider the following 275-residue polypeptide: MKTELRSCAACGEPISDRFFLEVGGCSWHAHCLRCCMCMCPLDRQQSCFIRERQVYCKADYSKNFGAKCSKCCRGISASDWVRRARELVFHLACFACDQCGRQLSTGEQFALMDDRVLCKAHYLETVEGGTTSSDEGCDGDGYHKSKTKRVRTTFTEEQLQVLQANFQIDSNPDGQDLERIASVTGLSKRVTQVWFQNSRARQKKHIHAGKNKIREPEGSSFARHINLQLTYSFQNNAQNPMHLNGSKAGLYPTHESSMDELSQDSSVHCMPSEV.

LIM zinc-binding domains follow at residues 6–67 and 68–129; these read RSCA…NFGA and KCSK…TVEG. Thr-126 is modified (phosphothreonine). The segment at residues 148–207 is a DNA-binding region (homeobox); that stretch reads TKRVRTTFTEEQLQVLQANFQIDSNPDGQDLERIASVTGLSKRVTQVWFQNSRARQKKHI. The tract at residues 253 to 275 is disordered; the sequence is PTHESSMDELSQDSSVHCMPSEV.

As to expression, first detected in neuroblasts in stage 9 embryos. Expressed in all 10 abdominal segments and in the labial segment during early embryogenesis. Expressed in the stage 14 developing epithelium. By embryonic stage 16, expression is refined to the abdominal histoblasts and salivary gland imaginal ring cells. Expressed in both larval and imaginal cells between the salivary gland and the salivary gland imaginal ring, in late third instar larvae. Also expressed in specific areas of the larval wing, leg and eye-antennal disks.

The protein localises to the nucleus. Probable transcription factor. Required for the establishment of a subset of imaginal tissues: the abdominal histoblasts and the salivary gland imaginal rings. The polypeptide is LIM/homeobox protein Awh (Drosophila melanogaster (Fruit fly)).